Consider the following 168-residue polypeptide: Probable chorismate pyruvate-lyase (168 aa).

Positions 75, 114, and 155 each coordinate substrate.

This sequence belongs to the UbiC family.

The protein localises to the cytoplasm. It catalyses the reaction chorismate = 4-hydroxybenzoate + pyruvate. It functions in the pathway cofactor biosynthesis; ubiquinone biosynthesis. Removes the pyruvyl group from chorismate, with concomitant aromatization of the ring, to provide 4-hydroxybenzoate (4HB) for the ubiquinone pathway. The chain is Probable chorismate pyruvate-lyase from Psychrobacter arcticus (strain DSM 17307 / VKM B-2377 / 273-4).